Here is a 317-residue protein sequence, read N- to C-terminus: Ribosomal RNA small subunit methyltransferase H (317 aa).

S-adenosyl-L-methionine is bound by residues 39 to 41, D59, F83, D104, and Q111; that span reads GGH.

It belongs to the methyltransferase superfamily. RsmH family.

Its subcellular location is the cytoplasm. It carries out the reaction cytidine(1402) in 16S rRNA + S-adenosyl-L-methionine = N(4)-methylcytidine(1402) in 16S rRNA + S-adenosyl-L-homocysteine + H(+). In terms of biological role, specifically methylates the N4 position of cytidine in position 1402 (C1402) of 16S rRNA. In Paraburkholderia phytofirmans (strain DSM 17436 / LMG 22146 / PsJN) (Burkholderia phytofirmans), this protein is Ribosomal RNA small subunit methyltransferase H.